The following is a 352-amino-acid chain: DNA-directed RNA polymerase subunit alpha (352 aa).

The interval 1-226 (MLISQRPTLT…ELFGLARELN (226 aa)) is alpha N-terminal domain (alpha-NTD). The tract at residues 243-352 (HIASFGLPIE…EQDYAETEQL (110 aa)) is alpha C-terminal domain (alpha-CTD). The segment at 324–352 (DASTGTWSDSGTFSDNDGGEQDYAETEQL) is disordered. The span at 326–338 (STGTWSDSGTFSD) shows a compositional bias: polar residues. Acidic residues predominate over residues 340-352 (DGGEQDYAETEQL).

It belongs to the RNA polymerase alpha chain family. In terms of assembly, homodimer. The RNAP catalytic core consists of 2 alpha, 1 beta, 1 beta' and 1 omega subunit. When a sigma factor is associated with the core the holoenzyme is formed, which can initiate transcription.

The catalysed reaction is RNA(n) + a ribonucleoside 5'-triphosphate = RNA(n+1) + diphosphate. In terms of biological role, DNA-dependent RNA polymerase catalyzes the transcription of DNA into RNA using the four ribonucleoside triphosphates as substrates. The polypeptide is DNA-directed RNA polymerase subunit alpha (Nocardia farcinica (strain IFM 10152)).